Consider the following 473-residue polypeptide: Vasculin (473 aa).

3 disordered regions span residues 1-25 (MAQH…SSLN), 44-170 (RRRH…SRTP), and 186-341 (SGFP…HQER). Ser-49 bears the Phosphoserine mark. An Omega-N-methylarginine modification is found at Arg-87. Positions 94 to 117 (NSRSRSSIFHSGKSQGLHENSIPD) are enriched in polar residues. The segment covering 119–133 (ETGRKEDKRERRQFE) has biased composition (basic and acidic residues). Composition is skewed to polar residues over residues 193 to 204 (NLQSQPVKNGTG) and 248 to 286 (NFNT…QQPR). 4 positions are modified to phosphoserine: Ser-274, Ser-276, Ser-322, and Ser-381. The segment covering 293–329 (MRSDKKSEFLKALKRDRVEEEHEDESHAGSEKDDDSF) has biased composition (basic and acidic residues). Residues 450 to 473 (TFKPTIENDDTETSSSDTSDDDDV) form a disordered region. Over residues 456–473 (ENDDTETSSSDTSDDDDV) the composition is skewed to acidic residues.

The protein belongs to the vasculin family. As to quaternary structure, interacts with GTF2B, GTF2F2, RNA polymerase II and TBP. Ubiquitously expressed (at protein level).

The protein resides in the nucleus. Functions as a GC-rich promoter-specific transactivating transcription factor. This chain is Vasculin (Gpbp1), found in Mus musculus (Mouse).